Reading from the N-terminus, the 318-residue chain is Glycine--tRNA ligase alpha subunit (318 aa).

The segment at 298–318 (EAGGSSPSTSRQGEAPRGESQ) is disordered. Positions 300-309 (GGSSPSTSRQ) are enriched in polar residues.

The protein belongs to the class-II aminoacyl-tRNA synthetase family. Tetramer of two alpha and two beta subunits.

The protein localises to the cytoplasm. It carries out the reaction tRNA(Gly) + glycine + ATP = glycyl-tRNA(Gly) + AMP + diphosphate. This is Glycine--tRNA ligase alpha subunit from Rhodopseudomonas palustris (strain BisB18).